A 173-amino-acid chain; its full sequence is Non-classical export protein 2 (173 aa).

Topologically, residues 1 to 10 (MLALADNILR) are cytoplasmic. The helical transmembrane segment at 11 to 30 (IINFLFLVISIGLISSLLNT) threads the bilayer. Residues 31 to 37 (QHRHSSR) lie on the Extracellular side of the membrane. A helical transmembrane segment spans residues 38–62 (VNYCMFACAYGIFTDSLYGVFANFI). Residues 63 to 75 (EPLAWPLVLFTLD) are Cytoplasmic-facing. The chain crosses the membrane as a helical span at residues 76-93 (FLNFVFTFTAGTVLAVGI). The Extracellular portion of the chain corresponds to 94 to 137 (RAHSCNNSSYVDSNKITQGSGTRCRQAQAAVAFLYFSCAIFLAK). Residues 138-157 (TLMSVFNMISNGAFGSGSFS) form a helical membrane-spanning segment. Residues 158–173 (KRRRTGQVGVPTISQV) are Cytoplasmic-facing.

Belongs to the NCE102 family.

It localises to the cell membrane. Involved in membrane organization. Required for the formation of membrane compartments of CAN1 (MCCs), localization of CAN1 at the MCCs and subsequent invagination of the plasma membrane at the MCCs sites. Involved in eisosome organization and might act as a sensor of sphingolipids that regulates plasma membrane function. Involved in a novel pathway of export of proteins that lack a cleavable signal sequence. It may be an accessory subunit to an essential core component of the non-classical export machinery. Non-classical export pathway also functions as an alternative clearance/detoxification pathway to eliminate damaged material, when the basic repair pathway is not sufficient. This is Non-classical export protein 2 (NCE102) from Saccharomyces cerevisiae (strain ATCC 204508 / S288c) (Baker's yeast).